Consider the following 771-residue polypeptide: Carnitine O-palmitoyltransferase 1, muscle isoform (771 aa).

Topologically, residues 1 to 47 (MAEAHQAVAFQFTVTPEGVDFQLSREVLKHIYLSVIRSWKKRLIRIK) are cytoplasmic. A helical transmembrane segment spans residues 48–73 (NGILRGVYPGSPTSWLVVVMATAGSS). The Mitochondrial intermembrane portion of the chain corresponds to 74-101 (YYNVDISMGLVYYIQRWLPEGRPYRTPY). The chain crosses the membrane as a helical span at residues 102 to 121 (TRTLFSMAIFSTGVWMMGIF). Residues 122 to 771 (FFRQTLKLLL…NLFQVPKADG (650 aa)) lie on the Cytoplasmic side of the membrane. His472 (proton acceptor) is an active-site residue. 554 to 566 (GKGLIKKCRTSPD) serves as a coordination point for CoA. (R)-carnitine is bound by residues Tyr588 and Thr601.

Belongs to the carnitine/choline acetyltransferase family.

The protein resides in the mitochondrion outer membrane. It carries out the reaction (R)-carnitine + hexadecanoyl-CoA = O-hexadecanoyl-(R)-carnitine + CoA. The protein operates within lipid metabolism; fatty acid beta-oxidation. Functionally, catalyzes the transfer of the acyl group of long-chain fatty acid-CoA conjugates onto carnitine, an essential step for the mitochondrial uptake of long-chain fatty acids and their subsequent beta-oxidation in the mitochondrion. In Bos taurus (Bovine), this protein is Carnitine O-palmitoyltransferase 1, muscle isoform (CPT1B).